The sequence spans 743 residues: 1,4-alpha-glucan branching enzyme GlgB (743 aa).

The active-site Nucleophile is Asp-416. Glu-469 acts as the Proton donor in catalysis.

Belongs to the glycosyl hydrolase 13 family. GlgB subfamily. As to quaternary structure, monomer.

The enzyme catalyses Transfers a segment of a (1-&gt;4)-alpha-D-glucan chain to a primary hydroxy group in a similar glucan chain.. The protein operates within glycan biosynthesis; glycogen biosynthesis. Catalyzes the formation of the alpha-1,6-glucosidic linkages in glycogen by scission of a 1,4-alpha-linked oligosaccharide from growing alpha-1,4-glucan chains and the subsequent attachment of the oligosaccharide to the alpha-1,6 position. This chain is 1,4-alpha-glucan branching enzyme GlgB, found in Shewanella baltica (strain OS185).